The primary structure comprises 132 residues: Fatty acid-binding protein, intestinal (132 aa).

An N-acetylalanine modification is found at alanine 2. The hexadecanoate site is built by tryptophan 83 and arginine 107. Residues tryptophan 83 and arginine 107 each coordinate tetradecanoate.

This sequence belongs to the calycin superfamily. Fatty-acid binding protein (FABP) family. Expressed in the small intestine. Highest expression levels in the proximal ileum.

The protein localises to the cytoplasm. FABPs are thought to play a role in the intracellular transport of long-chain fatty acids and their acyl-CoA esters. FABP2 is probably involved in triglyceride-rich lipoprotein synthesis. Binds saturated long-chain fatty acids with a high affinity, but binds with a lower affinity to unsaturated long-chain fatty acids. FABP2 may also help maintain energy homeostasis by functioning as a lipid sensor. In Mus musculus (Mouse), this protein is Fatty acid-binding protein, intestinal (Fabp2).